A 648-amino-acid polypeptide reads, in one-letter code: Acetyl-coenzyme A synthetase (648 aa).

CoA-binding positions include 191–194, T310, and N334; that span reads RGGR. Residues 386–388, 410–415, D499, and R514 each bind ATP; these read GEP and DTWWQT. S522 provides a ligand contact to CoA. R525 provides a ligand contact to ATP. 3 residues coordinate Mg(2+): V536, H538, and I541. R583 provides a ligand contact to CoA. Position 608 is an N6-acetyllysine (K608).

Belongs to the ATP-dependent AMP-binding enzyme family. Requires Mg(2+) as cofactor. In terms of processing, acetylated. Deacetylation by the SIR2-homolog deacetylase activates the enzyme.

The enzyme catalyses acetate + ATP + CoA = acetyl-CoA + AMP + diphosphate. Catalyzes the conversion of acetate into acetyl-CoA (AcCoA), an essential intermediate at the junction of anabolic and catabolic pathways. AcsA undergoes a two-step reaction. In the first half reaction, AcsA combines acetate with ATP to form acetyl-adenylate (AcAMP) intermediate. In the second half reaction, it can then transfer the acetyl group from AcAMP to the sulfhydryl group of CoA, forming the product AcCoA. This is Acetyl-coenzyme A synthetase from Aeromonas hydrophila subsp. hydrophila (strain ATCC 7966 / DSM 30187 / BCRC 13018 / CCUG 14551 / JCM 1027 / KCTC 2358 / NCIMB 9240 / NCTC 8049).